The following is a 495-amino-acid chain: Carotenoid 3,4-desaturase (495 aa).

It belongs to the carotenoid/retinoid oxidoreductase family.

The catalysed reaction is dihydroisopentenyldehydrorhodopin + A = isopentenyldehydrorhodopin + AH2. The enzyme catalyses dihydrobisanhydrobacterioruberin + A = bisanhydrobacterioruberin + AH2. Its pathway is carotenoid biosynthesis. In terms of biological role, involved in the biosynthesis of the acyclic C50 carotenoid bacterioruberin (BR). CrtD is involved in the desaturation reactions that form double bonds at C-3,4 of dihydroisopentenyldehydrorhodopin (DH-IDR) and C-3',4' of dihydrobisanhydrobacterioruberin (DH-BABR) to yield isopentenyld ehydrorhodopin (IDR) and bisanhydrobacterioruberin (BABR), respectively. In Haloarcula japonica (strain ATCC 49778 / DSM 6131 / JCM 7785 / NBRC 101032 / NCIMB 13157 / TR-1), this protein is Carotenoid 3,4-desaturase.